The primary structure comprises 1029 residues: uncharacterized protein (1029 aa).

Over residues Met-1 to Lys-23 the composition is skewed to basic and acidic residues. A disordered region spans residues Met-1 to Arg-31. Residues Thr-39 to Gln-168 form the Guanylate cyclase domain. Gly-261–Ser-268 is an ATP binding site.

This is an uncharacterized protein from Rhizobium meliloti (strain 1021) (Ensifer meliloti).